A 361-amino-acid chain; its full sequence is Peptide chain release factor 1 (361 aa).

An N5-methylglutamine modification is found at Gln235. The interval 286–305 (IDSARSAERKQKVGSGDRSE) is disordered.

The protein belongs to the prokaryotic/mitochondrial release factor family. Post-translationally, methylated by PrmC. Methylation increases the termination efficiency of RF1.

Its subcellular location is the cytoplasm. Peptide chain release factor 1 directs the termination of translation in response to the peptide chain termination codons UAG and UAA. This Rhodopseudomonas palustris (strain HaA2) protein is Peptide chain release factor 1.